The sequence spans 146 residues: L-fucose mutarotase (146 aa).

Histidine 22 functions as the Proton donor in the catalytic mechanism. Residues aspartate 30, arginine 109, and 131–133 contribute to the substrate site; that span reads YGN.

Belongs to the RbsD / FucU family. FucU mutarotase subfamily. In terms of assembly, homodecamer.

It localises to the cytoplasm. It carries out the reaction alpha-L-fucose = beta-L-fucose. It participates in carbohydrate metabolism; L-fucose metabolism. In terms of biological role, involved in the anomeric conversion of L-fucose. The sequence is that of L-fucose mutarotase from Glaesserella parasuis serovar 5 (strain SH0165) (Haemophilus parasuis).